A 104-amino-acid chain; its full sequence is Inner membrane protein YjcH (104 aa).

Residues 1–24 lie on the Cytoplasmic side of the membrane; that stretch reads MNGTIYQRIEDNAHFRELVEKRQR. The helical transmembrane segment at 25–47 threads the bilayer; that stretch reads FATILSIIMLAVYIGFILLIAFA. The Periplasmic segment spans residues 48–61; it reads PGWLGTPLNPNTSV. The chain crosses the membrane as a helical span at residues 62 to 84; it reads TRGIPIGVGVIVISFVLTGIYIW. Residues 85 to 104 lie on the Cytoplasmic side of the membrane; the sequence is RANGEFDRLNNEVLHEVQAS.

The protein resides in the cell inner membrane. The sequence is that of Inner membrane protein YjcH (yjcH) from Escherichia coli (strain K12).